The following is a 346-amino-acid chain: N-acetyl-gamma-glutamyl-phosphate reductase (346 aa).

Cysteine 150 is an active-site residue.

It belongs to the NAGSA dehydrogenase family. Type 1 subfamily.

The protein resides in the cytoplasm. The enzyme catalyses N-acetyl-L-glutamate 5-semialdehyde + phosphate + NADP(+) = N-acetyl-L-glutamyl 5-phosphate + NADPH + H(+). The protein operates within amino-acid biosynthesis; L-arginine biosynthesis; N(2)-acetyl-L-ornithine from L-glutamate: step 3/4. Catalyzes the NADPH-dependent reduction of N-acetyl-5-glutamyl phosphate to yield N-acetyl-L-glutamate 5-semialdehyde. The sequence is that of N-acetyl-gamma-glutamyl-phosphate reductase from Lachnoclostridium phytofermentans (strain ATCC 700394 / DSM 18823 / ISDg) (Clostridium phytofermentans).